Consider the following 117-residue polypeptide: Prefoldin subunit beta (117 aa).

The protein belongs to the prefoldin subunit beta family. In terms of assembly, heterohexamer of two alpha and four beta subunits.

The protein resides in the cytoplasm. Molecular chaperone capable of stabilizing a range of proteins. Seems to fulfill an ATP-independent, HSP70-like function in archaeal de novo protein folding. The sequence is that of Prefoldin subunit beta (pfdB) from Methanosarcina acetivorans (strain ATCC 35395 / DSM 2834 / JCM 12185 / C2A).